The primary structure comprises 1090 residues: Nitrogen assimilation transcription factor nit-4 (1090 aa).

Residues 1–14 (MNSSDVQMMSSQDA) are compositionally biased toward polar residues. Positions 1 to 43 (MNSSDVQMMSSQDAPGSAGLAPDNIASSLPSKKKSRRGADPTN) are disordered. A DNA-binding region (zn(2)-C6 fungal-type) is located at residues 53–81 (CIACRRRKSKCDGALPSCAACASVYGTEC). Disordered regions lie at residues 145-176 (RRDE…SQAV), 666-689 (FSTS…PAPP), 773-798 (HQHH…YQQQ), 825-875 (GIPT…VKPP), 936-999 (QGWD…QRQQ), and 1033-1053 (HGAE…TTVG). Positions 167 to 176 (GRDDATSQAV) are enriched in basic and acidic residues. Residues 666 to 677 (FSTSEVPSPNRT) show a composition bias toward polar residues. A compositionally biased stretch (low complexity) spans 849–859 (QPQQQQQPQAQ). 2 stretches are compositionally biased toward gly residues: residues 940-965 (LEGG…GGAG) and 976-988 (NIGG…GGST). Residues 990–999 (QRQQQQQRQQ) show a composition bias toward low complexity.

The protein localises to the nucleus. Its function is as follows. Pathway-specific regulatory gene of nitrate assimilation; it activates the transcription of the genes for nitrate and nitrite reductases. In Neurospora crassa (strain ATCC 24698 / 74-OR23-1A / CBS 708.71 / DSM 1257 / FGSC 987), this protein is Nitrogen assimilation transcription factor nit-4 (nit-4).